A 189-amino-acid chain; its full sequence is Large ribosomal subunit protein uL6 (189 aa).

Belongs to the universal ribosomal protein uL6 family. In terms of assembly, part of the 50S ribosomal subunit.

In terms of biological role, this protein binds to the 23S rRNA, and is important in its secondary structure. It is located near the subunit interface in the base of the L7/L12 stalk, and near the tRNA binding site of the peptidyltransferase center. This chain is Large ribosomal subunit protein uL6, found in Phocaeicola vulgatus (strain ATCC 8482 / DSM 1447 / JCM 5826 / CCUG 4940 / NBRC 14291 / NCTC 11154) (Bacteroides vulgatus).